A 215-amino-acid polypeptide reads, in one-letter code: Large ribosomal subunit protein uL4 (215 aa).

The tract at residues Thr-46–Arg-72 is disordered. Residues Ser-56–Ala-71 are compositionally biased toward gly residues.

The protein belongs to the universal ribosomal protein uL4 family. In terms of assembly, part of the 50S ribosomal subunit.

One of the primary rRNA binding proteins, this protein initially binds near the 5'-end of the 23S rRNA. It is important during the early stages of 50S assembly. It makes multiple contacts with different domains of the 23S rRNA in the assembled 50S subunit and ribosome. In terms of biological role, forms part of the polypeptide exit tunnel. This is Large ribosomal subunit protein uL4 from Helicobacter pylori (strain ATCC 700392 / 26695) (Campylobacter pylori).